Here is a 93-residue protein sequence, read N- to C-terminus: Small ribosomal subunit protein uS19 (93 aa).

The protein belongs to the universal ribosomal protein uS19 family.

Protein S19 forms a complex with S13 that binds strongly to the 16S ribosomal RNA. The sequence is that of Small ribosomal subunit protein uS19 from Kocuria rhizophila (strain ATCC 9341 / DSM 348 / NBRC 103217 / DC2201).